Reading from the N-terminus, the 198-residue chain is GTP cyclohydrolase-2 (198 aa).

GTP is bound at residue 52–56 (RMHSE). Positions 57, 68, and 70 each coordinate Zn(2+). GTP-binding positions include Q73, 94 to 96 (EGR), and T116. The Proton acceptor role is filled by D128. The Nucleophile role is filled by R130. Positions 151 and 156 each coordinate GTP.

It belongs to the GTP cyclohydrolase II family. Zn(2+) is required as a cofactor.

It carries out the reaction GTP + 4 H2O = 2,5-diamino-6-hydroxy-4-(5-phosphoribosylamino)-pyrimidine + formate + 2 phosphate + 3 H(+). The protein operates within cofactor biosynthesis; riboflavin biosynthesis; 5-amino-6-(D-ribitylamino)uracil from GTP: step 1/4. In terms of biological role, catalyzes the conversion of GTP to 2,5-diamino-6-ribosylamino-4(3H)-pyrimidinone 5'-phosphate (DARP), formate and pyrophosphate. The chain is GTP cyclohydrolase-2 from Vibrio vulnificus (strain CMCP6).